Reading from the N-terminus, the 250-residue chain is Transmembrane ascorbate-dependent reductase CYB561 (250 aa).

Methionine 1 carries the N-acetylmethionine modification. Residues 1-15 are Cytoplasmic-facing; sequence MEHSSASVPAALPYY. The helical transmembrane segment at 16 to 36 threads the bilayer; it reads VAFSQLLGLTVVAVTGAWLGL. The Cytochrome b561 domain maps to 18–219; that stretch reads FSQLLGLTVV…FGVVVLYILA (202 aa). At 37-50 the chain is on the vesicular side; it reads YRGGIAWESSLQFN. The helical transmembrane segment at 51–71 threads the bilayer; that stretch reads VHPLCMVIGMIFLQGDALLVY. Heme b-binding residues include histidine 52, arginine 72, and lysine 79. Topologically, residues 72–83 are cytoplasmic; the sequence is RVFRREAKRTTK. Residues lysine 79 and lysine 83 each coordinate L-ascorbate. A helical membrane pass occupies residues 84-104; that stretch reads ILHGLLHVFAFIIALVGLVAV. Heme b contacts are provided by residues histidine 86, 115-118, and histidine 120; that span reads DLYS. The Vesicular portion of the chain corresponds to 105–123; it reads FDYHKKKGYADLYSLHSWC. A helical membrane pass occupies residues 124–144; sequence GILVFVLYFVQWLVGFSFFLF. The Cytoplasmic portion of the chain corresponds to 145–157; sequence PGASFSLRSRYRP. Arginine 152 provides a ligand contact to L-ascorbate. The helical transmembrane segment at 158–178 threads the bilayer; sequence QHIFFGATIFLFSVGTALLGL. 2 residues coordinate heme b: histidine 159 and glutamate 180. Residues 179–197 lie on the Vesicular side of the membrane; the sequence is KEALLFKLGSKYSTFEPEG. A helical membrane pass occupies residues 198–218; that stretch reads VLANVLGLLLVCFGVVVLYIL. The Cytoplasmic portion of the chain corresponds to 219-250; the sequence is AQADWKRPSQAEEQALSMDFKTLTEGDSPSPQ. Lysine 224 provides a ligand contact to heme b. 2 positions are modified to phosphoserine: serine 246 and serine 248.

Heme b serves as cofactor. In terms of tissue distribution, abundantly distributed in a number of neuroendocrine tissues.

It is found in the cytoplasmic vesicle. It localises to the secretory vesicle. The protein localises to the chromaffin granule membrane. It carries out the reaction monodehydro-L-ascorbate radical(out) + L-ascorbate(in) = monodehydro-L-ascorbate radical(in) + L-ascorbate(out). Its function is as follows. Transmembrane reductase that uses ascorbate as an electron donor in the cytoplasm and transfers electrons across membranes to reduce monodehydro-L-ascorbate radical in the lumen of secretory vesicles. It is therefore involved the regeneration and homeostasis within secretory vesicles of ascorbate which in turn provides reducing equivalents needed to support the activity of intravesicular enzymes. In Mus musculus (Mouse), this protein is Transmembrane ascorbate-dependent reductase CYB561.